Reading from the N-terminus, the 219-residue chain is Orotate phosphoribosyltransferase (219 aa).

Residue Lys-26 participates in 5-phospho-alpha-D-ribose 1-diphosphate binding. 34-35 (FF) contributes to the orotate binding site. 5-phospho-alpha-D-ribose 1-diphosphate-binding positions include 72–73 (YK), Arg-98, Lys-99, Lys-102, His-104, and 124–132 (DDVITAGTA). Residues Thr-128 and Arg-156 each contribute to the orotate site.

This sequence belongs to the purine/pyrimidine phosphoribosyltransferase family. PyrE subfamily. Homodimer. It depends on Mg(2+) as a cofactor.

The catalysed reaction is orotidine 5'-phosphate + diphosphate = orotate + 5-phospho-alpha-D-ribose 1-diphosphate. It functions in the pathway pyrimidine metabolism; UMP biosynthesis via de novo pathway; UMP from orotate: step 1/2. Functionally, catalyzes the transfer of a ribosyl phosphate group from 5-phosphoribose 1-diphosphate to orotate, leading to the formation of orotidine monophosphate (OMP). This Xanthomonas campestris pv. campestris (strain 8004) protein is Orotate phosphoribosyltransferase.